Reading from the N-terminus, the 179-residue chain is Stathmin-2 (179 aa).

The membrane attachment stretch occupies residues Met1–Tyr26. Ser16 carries the phosphoserine modification. Residues Cys22 and Cys24 are each lipidated (S-palmitoyl cysteine). Residues Asp38 to Gly179 enclose the SLD domain. A regulatory/phosphorylation domain region spans residues Asp39–Lys96. Ser50, Ser62, Ser73, and Ser97 each carry phosphoserine. The stretch at Lys75–Gly179 forms a coiled coil.

Belongs to the stathmin family. As to quaternary structure, interacts with MAPK8. Interacts with ITM2C. Interacts with KIFBP. Interacts (via the N-terminal region) with CIB1 (via C-terminal region); the interaction is direct, occurs in a calcium-dependent manner and attenuates the neurite outgrowth inhibition of STMN2. Post-translationally, sumoylated. In terms of processing, phosphorylated mostly by MAPK8, but also by MAPK9 and MAPK10 in the developing brain cortex. N-terminal palmitoylation promotes specific anchoring to the cytosolic leaflet of Golgi membranes and subsequent vesicular trafficking along dendrites and axons. Neuronal Stathmins are substrates for palmitoyltransferases ZDHHC3, ZDHHC7 and ZDHHC15. As to expression, neuron specific.

The protein localises to the cytoplasm. It is found in the perinuclear region. It localises to the cell projection. Its subcellular location is the growth cone. The protein resides in the membrane. The protein localises to the axon. It is found in the golgi apparatus. It localises to the endosome. Its subcellular location is the lamellipodium. In terms of biological role, regulator of microtubule stability. When phosphorylated by MAPK8, stabilizes microtubules and consequently controls neurite length in cortical neurons. In the developing brain, negatively regulates the rate of exit from multipolar stage and retards radial migration from the ventricular zone. This chain is Stathmin-2 (STMN2), found in Homo sapiens (Human).